The sequence spans 571 residues: 2-succinyl-5-enolpyruvyl-6-hydroxy-3-cyclohexene-1-carboxylate synthase (571 aa).

This sequence belongs to the TPP enzyme family. MenD subfamily. As to quaternary structure, homodimer. The cofactor is Mg(2+). Mn(2+) serves as cofactor. It depends on thiamine diphosphate as a cofactor.

The catalysed reaction is isochorismate + 2-oxoglutarate + H(+) = 5-enolpyruvoyl-6-hydroxy-2-succinyl-cyclohex-3-ene-1-carboxylate + CO2. It functions in the pathway quinol/quinone metabolism; 1,4-dihydroxy-2-naphthoate biosynthesis; 1,4-dihydroxy-2-naphthoate from chorismate: step 2/7. It participates in quinol/quinone metabolism; menaquinone biosynthesis. Its function is as follows. Catalyzes the thiamine diphosphate-dependent decarboxylation of 2-oxoglutarate and the subsequent addition of the resulting succinic semialdehyde-thiamine pyrophosphate anion to isochorismate to yield 2-succinyl-5-enolpyruvyl-6-hydroxy-3-cyclohexene-1-carboxylate (SEPHCHC). This Vibrio parahaemolyticus serotype O3:K6 (strain RIMD 2210633) protein is 2-succinyl-5-enolpyruvyl-6-hydroxy-3-cyclohexene-1-carboxylate synthase.